Consider the following 146-residue polypeptide: MKKMRKQTGFTLLEVMVVVVILGILASFVVPNLLGNKEKADQQKAVTDIVALENALDMYKLDNSVYPTTDQGLEALVTKPTNPEPRNYREGGYIKRLPKDPWGNDYQYLSPGDKGTIDVFTLGADGQEGGEGTGADIGNWNIQDFQ.

A propeptide spans 1–9 (MKKMRKQTG) (leader sequence). F10 is subject to N-methylphenylalanine. Residues 10–30 (FTLLEVMVVVVILGILASFVV) form a helical membrane-spanning segment.

It belongs to the GSP G family. In terms of assembly, type II secretion system is composed of four main components: the outer membrane complex, the inner membrane complex, the cytoplasmic secretion ATPase and the periplasm-spanning pseudopilus. Forms homomultimers. Interacts with EspL. Post-translationally, cleaved by the prepilin peptidase. Methylated by prepilin peptidase at the amino group of the N-terminal phenylalanine once the leader sequence is cleaved.

It is found in the cell inner membrane. Functionally, core component of the type II secretion system required for the energy-dependent secretion of extracellular factors such as proteases and toxins from the periplasm. Pseudopilin (pilin-like) protein that polymerizes to form the pseudopilus. Further polymerization triggers pseudopilus growth. The protein is Type II secretion system core protein G (epsG) of Vibrio cholerae serotype O1 (strain ATCC 39315 / El Tor Inaba N16961).